A 160-amino-acid polypeptide reads, in one-letter code: Small ribosomal subunit protein bS6 (160 aa).

2 stretches are compositionally biased toward basic and acidic residues: residues 94 to 119 (EEHE…RGGR) and 125 to 152 (RGDR…REDA). Residues 94-160 (EEHEEGPSAM…DADTAAASEE (67 aa)) form a disordered region.

This sequence belongs to the bacterial ribosomal protein bS6 family.

In terms of biological role, binds together with bS18 to 16S ribosomal RNA. The polypeptide is Small ribosomal subunit protein bS6 (Rhodopseudomonas palustris (strain BisB5)).